The sequence spans 583 residues: Eukaryotic translation initiation factor 3 subunit D (583 aa).

Positions 116-150 (GRAQRGAGQRGGRAGFQRVGAGRGQGDRFYDNRGG) are disordered. Over residues 140–149 (QGDRFYDNRG) the composition is skewed to basic and acidic residues. An RNA gate region spans residues 298-312 (SLDLVTVNENAIDAP). The segment at 561–583 (NTFEEDEEAAAEEEEQKAEEDEE) is disordered. Over residues 563–583 (FEEDEEAAAEEEEQKAEEDEE) the composition is skewed to acidic residues.

Belongs to the eIF-3 subunit D family. Component of the eukaryotic translation initiation factor 3 (eIF-3) complex.

Its subcellular location is the cytoplasm. Functionally, mRNA cap-binding component of the eukaryotic translation initiation factor 3 (eIF-3) complex, which is involved in protein synthesis of a specialized repertoire of mRNAs and, together with other initiation factors, stimulates binding of mRNA and methionyl-tRNAi to the 40S ribosome. The eIF-3 complex specifically targets and initiates translation of a subset of mRNAs involved in cell proliferation. In the eIF-3 complex, eif3d specifically recognizes and binds the 7-methylguanosine cap of a subset of mRNAs. The chain is Eukaryotic translation initiation factor 3 subunit D from Aspergillus oryzae (strain ATCC 42149 / RIB 40) (Yellow koji mold).